Consider the following 62-residue polypeptide: MTTQKQLKVTQKRSTVGRIASHKACVAGLGLRRINHSVVVADTPENRGMINKVAYLLEVEEC.

It belongs to the universal ribosomal protein uL30 family. As to quaternary structure, part of the 50S ribosomal subunit.

This is Large ribosomal subunit protein uL30 from Alkalilimnicola ehrlichii (strain ATCC BAA-1101 / DSM 17681 / MLHE-1).